Reading from the N-terminus, the 257-residue chain is uncharacterized protein (257 aa).

The signal sequence occupies residues 1–22 (MGYLKRFALYISVMILIFAIAG). Residue Cys23 is the site of N-palmitoyl cysteine attachment. The S-diacylglycerol cysteine moiety is linked to residue Cys23.

It belongs to the staphylococcal tandem lipoprotein family.

It is found in the cell membrane. This is an uncharacterized protein from Staphylococcus aureus (strain USA300).